A 334-amino-acid polypeptide reads, in one-letter code: N-acetyl-gamma-glutamyl-phosphate reductase (334 aa).

The active site involves Cys154.

Belongs to the NAGSA dehydrogenase family. Type 1 subfamily.

It localises to the cytoplasm. The enzyme catalyses N-acetyl-L-glutamate 5-semialdehyde + phosphate + NADP(+) = N-acetyl-L-glutamyl 5-phosphate + NADPH + H(+). The protein operates within amino-acid biosynthesis; L-arginine biosynthesis; N(2)-acetyl-L-ornithine from L-glutamate: step 3/4. Its function is as follows. Catalyzes the NADPH-dependent reduction of N-acetyl-5-glutamyl phosphate to yield N-acetyl-L-glutamate 5-semialdehyde. This chain is N-acetyl-gamma-glutamyl-phosphate reductase, found in Aliivibrio fischeri (strain ATCC 700601 / ES114) (Vibrio fischeri).